Here is a 337-residue protein sequence, read N- to C-terminus: Nucleotide sugar transporter SLC35D2 (337 aa).

Residues 1 to 27 are Cytoplasmic-facing; sequence MTAGGQAEAEGAGGEPGAARLPSRVAR. Residues 28 to 48 traverse the membrane as a helical segment; the sequence is LLSALFYGTCSFLIVLVNKAL. The Extracellular segment spans residues 49–53; the sequence is LTTYG. Residues 54 to 74 form a helical membrane-spanning segment; that stretch reads FPSPIFLGIGQMAATIMILYV. Residues 75–146 lie on the Cytoplasmic side of the membrane; that stretch reads SKLNKIIHFP…IILGKQYSLN (72 aa). 2 helical membrane-spanning segments follow: residues 147–167 and 168–188; these read IILSVFAIILGAFIAAGSDLA and FNLEGYIFVFLNDIFTAANGV. The Cytoplasmic portion of the chain corresponds to 189-201; the sequence is YTKQKMDPKELGK. A helical transmembrane segment spans residues 202–222; the sequence is YGVLFYNACFMIIPTLIISVS. The Extracellular portion of the chain corresponds to 223–237; that stretch reads TGDLQQATEFNQWKN. A helical membrane pass occupies residues 238–258; the sequence is VVFILQFLLSCFLGFLLMYST. The Cytoplasmic portion of the chain corresponds to 259–265; it reads VLCSYYN. Residues 266 to 288 form a helical membrane-spanning segment; it reads SALTTAVVGAIKNVSVAYIGILI. The Extracellular segment spans residues 289-292; it reads GGDY. Residues 293–315 traverse the membrane as a helical segment; that stretch reads IFSLLNFVGLNICMAGGLRYSFL. Residues 316–337 are Cytoplasmic-facing; it reads TLSSQLKPKPVGEENICLDLKS.

It belongs to the TPT transporter family. SLC35D subfamily. Highly expressed in heart, kidney, small intestine, placenta, lung and peripheral blood leukocyte. Weakly expressed in skeletal muscle and spleen. Not expressed in brain, colon and thymus.

It localises to the golgi apparatus membrane. It carries out the reaction UMP(out) + UDP-N-acetyl-alpha-D-glucosamine(in) = UMP(in) + UDP-N-acetyl-alpha-D-glucosamine(out). The catalysed reaction is UMP(out) + UDP-alpha-D-glucose(in) = UMP(in) + UDP-alpha-D-glucose(out). Its function is as follows. Nucleotide sugar antiporter transporting UDP-N-acetylglucosamine (UDP-GlcNAc) and UDP-glucose (UDP-Glc) from the cytosol into the lumen of the Golgi in exchange of UMP. By supplying UDP-N-acetylglucosamine, a donor substrate to heparan sulfate synthases, probably takes part in the synthesis of these glycoconjugates. The polypeptide is Nucleotide sugar transporter SLC35D2 (Homo sapiens (Human)).